We begin with the raw amino-acid sequence, 118 residues long: U-scoloptoxin(05)-Cw1a (118 aa).

Residues 1-22 form the signal peptide; the sequence is MNPLNLSTFIVFTLFAASATTA.

Belongs to the scoloptoxin-05 family. Contains 5 disulfide bonds. As to expression, expressed by the venom gland.

It localises to the secreted. This is U-scoloptoxin(05)-Cw1a from Cormocephalus westwoodi (Westwood's green centipede).